Consider the following 130-residue polypeptide: Fluoride-specific ion channel FluC (130 aa).

Transmembrane regions (helical) follow at residues 9 to 29 (LAII…TIFL), 39 to 59 (YATF…VTLA), 71 to 91 (LLLA…ALEV), and 104 to 124 (VLYG…GSLI). Residues G79 and T82 each contribute to the Na(+) site.

The protein belongs to the fluoride channel Fluc/FEX (TC 1.A.43) family.

It is found in the cell inner membrane. It carries out the reaction fluoride(in) = fluoride(out). Its activity is regulated as follows. Na(+) is not transported, but it plays an essential structural role and its presence is essential for fluoride channel function. Its function is as follows. Fluoride-specific ion channel. Important for reducing fluoride concentration in the cell, thus reducing its toxicity. In Synechocystis sp. (strain ATCC 27184 / PCC 6803 / Kazusa), this protein is Fluoride-specific ion channel FluC.